A 100-amino-acid chain; its full sequence is Small ribosomal subunit protein uS14c (100 aa).

The protein belongs to the universal ribosomal protein uS14 family. As to quaternary structure, part of the 30S ribosomal subunit.

It localises to the plastid. The protein localises to the chloroplast. Its function is as follows. Binds 16S rRNA, required for the assembly of 30S particles. This Illicium oligandrum (Star anise) protein is Small ribosomal subunit protein uS14c.